We begin with the raw amino-acid sequence, 273 residues long: MKLDTSGLETTMPVIGFGSNSEMLDGFSSAPSFDLPRTTDFDGFQKKAVEMVKPAKGTTTLAFIFKEGVMVAADSRASMGGYISSQSVKKIIEINPYMLGTMAGGAADCQFWHRNLGIKCRLHELANKRRISVSGASKLLANMLYSYRGMGLSVGTMIAGWDETGPGLYYVDNEGGRLKGDRFSVGSGSPYAYGVLDSGYKFDMSVEEASELARRSIYHATFRDGASGGVASVYHVGPQGWTKLSGDDVGELHYHYYPVAPITAEHVMEEAAE.

Positions 1-57 (MKLDTSGLETTMPVIGFGSNSEMLDGFSSAPSFDLPRTTDFDGFQKKAVEMVKPAKG) are cleaved as a propeptide — removed in mature form. Residue threonine 58 is the Nucleophile of the active site.

The protein belongs to the peptidase T1B family. Component of the 20S core complex of the 26S proteasome. The 26S proteasome is composed of a core protease (CP), known as the 20S proteasome, capped at one or both ends by the 19S regulatory particle (RP/PA700). The 20S proteasome core is composed of 28 subunits that are arranged in four stacked rings, resulting in a barrel-shaped structure. The two end rings are each formed by seven alpha subunits, and the two central rings are each formed by seven beta subunits. The catalytic chamber with the active sites is on the inside of the barrel.

It is found in the cytoplasm. The protein localises to the nucleus. It catalyses the reaction Cleavage of peptide bonds with very broad specificity.. The proteasome is a multicatalytic proteinase complex which is characterized by its ability to cleave peptides with Arg, Phe, Tyr, Leu, and Glu adjacent to the leaving group at neutral or slightly basic pH. The proteasome has an ATP-dependent proteolytic activity. The sequence is that of Proteasome subunit beta type-5-B (PBE2) from Arabidopsis thaliana (Mouse-ear cress).